Here is a 467-residue protein sequence, read N- to C-terminus: Amino-acid permease RocE (467 aa).

12 consecutive transmembrane segments (helical) span residues 21-41 (FMIS…GFTI), 47-67 (LGAV…MLCL), 87-107 (FISP…WAVT), 122-142 (WFPH…MFIL), 162-182 (ILII…LIDL), 207-227 (MLIT…IGVA), 246-266 (VWRT…MIPW), 283-303 (IGIP…LLSV), 336-356 (VPMY…LTKF), 361-381 (TVYM…WITI), 409-429 (YPVL…SLAF), and 435-455 (IALY…HVVI).

It belongs to the amino acid-polyamine-organocation (APC) superfamily. Amino acid transporter (AAT) (TC 2.A.3.1) family.

Its subcellular location is the cell membrane. Putative transport protein involved in arginine degradative pathway. Probably transports arginine or ornithine. This Bacillus subtilis (strain 168) protein is Amino-acid permease RocE.